A 440-amino-acid polypeptide reads, in one-letter code: GTPase Der (440 aa).

EngA-type G domains follow at residues proline 3–aspartate 168 and leucine 177–threonine 353. GTP contacts are provided by residues glycine 9–serine 16, aspartate 56–leucine 60, asparagine 119–aspartate 122, glycine 183–serine 190, aspartate 230–isoleucine 234, and asparagine 295–aspartate 298. The KH-like domain maps to lysine 354–serine 438.

Belongs to the TRAFAC class TrmE-Era-EngA-EngB-Septin-like GTPase superfamily. EngA (Der) GTPase family. Associates with the 50S ribosomal subunit.

Functionally, GTPase that plays an essential role in the late steps of ribosome biogenesis. This is GTPase Der from Fusobacterium nucleatum subsp. nucleatum (strain ATCC 25586 / DSM 15643 / BCRC 10681 / CIP 101130 / JCM 8532 / KCTC 2640 / LMG 13131 / VPI 4355).